A 429-amino-acid polypeptide reads, in one-letter code: Nicotinate phosphoribosyltransferase (429 aa).

Nicotinate is bound by residues Y15, F177, and T229. H232 carries the phosphohistidine; by autocatalysis modification. Nicotinate is bound at residue R294. T355 provides a ligand contact to 5-phospho-alpha-D-ribose 1-diphosphate.

Belongs to the NAPRTase family. In terms of processing, transiently phosphorylated on a His residue during the reaction cycle. Phosphorylation strongly increases the affinity for substrates and increases the rate of nicotinate D-ribonucleotide production. Dephosphorylation regenerates the low-affinity form of the enzyme, leading to product release.

It localises to the cytoplasm. Its subcellular location is the nucleus. The catalysed reaction is nicotinate + 5-phospho-alpha-D-ribose 1-diphosphate + ATP + H2O = nicotinate beta-D-ribonucleotide + ADP + phosphate + diphosphate. The protein operates within cofactor biosynthesis; NAD(+) biosynthesis; nicotinate D-ribonucleotide from nicotinate: step 1/1. In terms of biological role, catalyzes the first step in the biosynthesis of NAD from nicotinic acid, the ATP-dependent synthesis of beta-nicotinate D-ribonucleotide from nicotinate and 5-phospho-D-ribose 1-phosphate. Essential for growth under anaerobic conditions. This Saccharomyces cerevisiae (strain ATCC 204508 / S288c) (Baker's yeast) protein is Nicotinate phosphoribosyltransferase (NPT1).